The primary structure comprises 226 residues: ATP synthase subunit a (226 aa).

The next 5 membrane-spanning stretches (helical) occupy residues 18–38 (LSLNWLSTFLGLLIIPSTYWL), 74–94 (FVSLFSLIMFNNFLGLFPYIF), 100–120 (LTLTLTLAFPLWLSFMLYGWI), 162–182 (LTANMIAGHLLMTLLGNTGPM), and 187–207 (IILSLILITQIALLVLESAVA).

Belongs to the ATPase A chain family. In terms of assembly, F-type ATPases have 2 components, CF(1) - the catalytic core - and CF(0) - the membrane proton channel. CF(1) has five subunits: alpha(3), beta(3), gamma(1), delta(1), epsilon(1). CF(0) has three main subunits: a, b and c.

Its subcellular location is the mitochondrion inner membrane. Mitochondrial membrane ATP synthase (F(1)F(0) ATP synthase or Complex V) produces ATP from ADP in the presence of a proton gradient across the membrane which is generated by electron transport complexes of the respiratory chain. F-type ATPases consist of two structural domains, F(1) - containing the extramembraneous catalytic core and F(0) - containing the membrane proton channel, linked together by a central stalk and a peripheral stalk. During catalysis, ATP synthesis in the catalytic domain of F(1) is coupled via a rotary mechanism of the central stalk subunits to proton translocation. Key component of the proton channel; it may play a direct role in the translocation of protons across the membrane. This chain is ATP synthase subunit a, found in Aedes aegypti (Yellowfever mosquito).